A 497-amino-acid polypeptide reads, in one-letter code: Trichoplein keratin filament-binding protein (497 aa).

Coiled-coil stretches lie at residues 67–140 (HCEK…LLYE), 166–271 (ATQK…ELGR), and 327–479 (MKQV…AKTM). The interaction with keratin proteins stretch occupies residues 72 to 457 (KEEKRKILEL…WEAARQEEEE (386 aa)). Positions 167–188 (TQKEEKKQQEATEKQENKRLEN) are disordered. Residues 168-188 (QKEEKKQQEATEKQENKRLEN) show a composition bias toward basic and acidic residues. The interval 258 to 424 (RQMAALRRKT…KQLAQRAKEE (167 aa)) is trichohyalin/plectin homology domain. The disordered stretch occupies residues 441-497 (AERQGQEWEAARQEEEEEEEARQAEEHSNALLQQEAKTMAEKGYQPKLHGHLRIAWD). Residues 444–453 (QGQEWEAARQ) are compositionally biased toward basic and acidic residues. Positions 488 to 497 (LHGHLRIAWD) are enriched in basic residues.

It belongs to the TCHP family. In terms of assembly, interacts specifically with keratin proteins including, KRT5, KRT6A, KRT8, KRT14, KRT16 and KRT18. Interacts with KCTD17. Post-translationally, ubiquitinated. Ubiquitination by the BCR(KCTD17) E3 ubiquitin ligase complex results in proteasomal degradation, and induces ciliogenesis. Expressed in all tissues examined, including brain, liver, small intestine, large intestine, lung and heart. Found concentrated in tubular structures within hepatocytes, and in the apical cortical region and desmosomes of the apical junctional domain in enterocytes of the small intestine. In the hair follicle, localized at the outer root sheath. Also expressed in blood vessels (at protein level).

The protein resides in the cytoplasm. It is found in the cytoskeleton. Its subcellular location is the cell membrane. The protein localises to the mitochondrion. It localises to the microtubule organizing center. The protein resides in the centrosome. Its function is as follows. Tumor suppressor which has the ability to inhibit cell growth and be pro-apoptotic during cell stress. May act as a 'capping' or 'branching' protein for keratin filaments in the cell periphery. May regulate K8/K18 filament and desmosome organization mainly at the apical or peripheral regions of simple epithelial cells. Is a negative regulator of ciliogenesis. The sequence is that of Trichoplein keratin filament-binding protein from Mus musculus (Mouse).